The sequence spans 359 residues: MLENRVKTKQIFIGGVAIGGDAPISTQSMTFSKTADIESTKNQIDRFKLAGADLVRVAVSNEKDALALKELKKVSPLPLIADIHFHYKFALIAAQSVDAIRINPGNIGSKDKIKAVVDACKEKNIPIRIGVNAGSLEKQFDQKYGPTPKGMVESALYNAKLLEDLDFTDFKISLKASDVVRTIEAYRMLRPLVIYPFHLGVTEAGNLFSSSIKSAMALGGLLMEGIGDTMRVSITGELENEIKVARAILRHSGRLKEGINWISCPTCGRIEANLVDMASKVEKRLSHIKTPLDISVMGCVVNALGEAKHADMAIAFGNRSGLIIKEGKVIHKLAEKDLFETFVIEVENLAKEREKSLKD.

[4Fe-4S] cluster is bound by residues C264, C267, C299, and E306.

Belongs to the IspG family. The cofactor is [4Fe-4S] cluster.

The enzyme catalyses (2E)-4-hydroxy-3-methylbut-2-enyl diphosphate + oxidized [flavodoxin] + H2O + 2 H(+) = 2-C-methyl-D-erythritol 2,4-cyclic diphosphate + reduced [flavodoxin]. Its pathway is isoprenoid biosynthesis; isopentenyl diphosphate biosynthesis via DXP pathway; isopentenyl diphosphate from 1-deoxy-D-xylulose 5-phosphate: step 5/6. In terms of biological role, converts 2C-methyl-D-erythritol 2,4-cyclodiphosphate (ME-2,4cPP) into 1-hydroxy-2-methyl-2-(E)-butenyl 4-diphosphate. The chain is 4-hydroxy-3-methylbut-2-en-1-yl diphosphate synthase (flavodoxin) from Helicobacter pylori (strain J99 / ATCC 700824) (Campylobacter pylori J99).